Here is a 164-residue protein sequence, read N- to C-terminus: Peptidyl-prolyl cis-trans isomerase A-like 4G (164 aa).

The PPIase cyclophilin-type domain occupies 7 to 163; that stretch reads FFDITVDGKP…KKITIADCGQ (157 aa).

Belongs to the cyclophilin-type PPIase family. PPIase A subfamily.

It is found in the cytoplasm. It carries out the reaction [protein]-peptidylproline (omega=180) = [protein]-peptidylproline (omega=0). Functionally, PPIases accelerate the folding of proteins. It catalyzes the cis-trans isomerization of proline imidic peptide bonds in oligopeptides. The protein is Peptidyl-prolyl cis-trans isomerase A-like 4G (PPIAL4G) of Homo sapiens (Human).